Reading from the N-terminus, the 188-residue chain is Peptidyl-tRNA hydrolase (188 aa).

Tyr14 lines the tRNA pocket. The active-site Proton acceptor is the His19. The tRNA site is built by Tyr60 and Asn62.

It belongs to the PTH family. As to quaternary structure, monomer.

It is found in the cytoplasm. It catalyses the reaction an N-acyl-L-alpha-aminoacyl-tRNA + H2O = an N-acyl-L-amino acid + a tRNA + H(+). Hydrolyzes ribosome-free peptidyl-tRNAs (with 1 or more amino acids incorporated), which drop off the ribosome during protein synthesis, or as a result of ribosome stalling. In terms of biological role, catalyzes the release of premature peptidyl moieties from peptidyl-tRNA molecules trapped in stalled 50S ribosomal subunits, and thus maintains levels of free tRNAs and 50S ribosomes. This is Peptidyl-tRNA hydrolase from Mycoplasmopsis agalactiae (strain NCTC 10123 / CIP 59.7 / PG2) (Mycoplasma agalactiae).